The primary structure comprises 1010 residues: Collagen, type I, alpha 1b (1010 aa).

Residues 1–24 show a composition bias toward pro residues; the sequence is SSGPPQPGPMGPMGPRGPPGPPGS. Residues 1 to 969 form a disordered region; that stretch reads SSGPPQPGPM…PDGTQKSPAR (969 aa). Residues 25 to 48 are compositionally biased toward low complexity; the sequence is SGPQGFTGPPGEPGEPGASGAMGS. A compositionally biased stretch (basic and acidic residues) spans 58 to 72; it reads NGDDGEPGKPGRPGE. Low complexity predominate over residues 73-82; the sequence is RGAAGPQGAR. Pro residues predominate over residues 145–159; that stretch reads GGPPGPTGPAGPPGF. 2 stretches are compositionally biased toward gly residues: residues 160–179 and 203–212; these read PGGA…GNEG and GTDGGPGAKG. Low complexity-rich tracts occupy residues 213–268 and 300–310; these read SPGA…PGPA and ERGAPGARGFP. Positions 311–323 are enriched in gly residues; it reads GADGGAGGKGAPG. 2 stretches are compositionally biased toward low complexity: residues 324-343 and 405-448; these read ERGA…PGSK and PAGA…APGE. 3 stretches are compositionally biased toward gly residues: residues 468–477, 486–495, and 519–528; these read GAPGLGGPTG, GAPGGLGAPG, and GGKGGDGAPG. Composition is skewed to low complexity over residues 559–568 and 581–596; these read VAGPTGPRGA and AGFA…PGAK. Composition is skewed to gly residues over residues 609-618 and 633-642; these read GAPGPGGPVG and GARGGAGPPG. Composition is skewed to low complexity over residues 643–662, 679–701, and 796–805; these read ATGF…AGAA, ETGA…SGEK, and APGAVGPSGK. The segment covering 834–847 has biased composition (basic and acidic residues); the sequence is KGDRGEAGEAGDRG. Low complexity predominate over residues 872–900; sequence PAGASGPAGPRGPAGSNGAAGKDGMNGLP. Residues 918-933 show a composition bias toward pro residues; it reads AGPPGPPGPAGPPGPP. Positions 982 to 1010 constitute a Fibrillar collagen NC1 domain; the sequence is RLPLLDLAPMDVGAPDQEFGVEVGPVCFL.

It belongs to the fibrillar collagen family.

It localises to the secreted. The protein localises to the extracellular space. The protein resides in the extracellular matrix. The protein is Collagen, type I, alpha 1b of Epinephelus marginatus (Dusky grouper).